Reading from the N-terminus, the 214-residue chain is SH3 domain-binding glutamic acid-rich protein (214 aa).

An SH3-binding motif is present at residues 61-67; the sequence is NGIPLPP. The interval 101-214 is disordered; the sequence is PGSKVTKSEE…EEEAGEGEDS (114 aa). The span at 129 to 144 shows a compositional bias: basic and acidic residues; that stretch reads GTEKAEKSGENEAQKE. 2 stretches are compositionally biased toward acidic residues: residues 162 to 192 and 198 to 214; these read EGED…EAPE and EAEE…GEDS.

The protein belongs to the SH3BGR family.

The sequence is that of SH3 domain-binding glutamic acid-rich protein (Sh3bgr) from Mus musculus (Mouse).